Here is a 205-residue protein sequence, read N- to C-terminus: SREBP regulating gene protein (205 aa).

Residues 1–16 (MVNLAAMVWRRLLRKR) lie on the Cytoplasmic side of the membrane. The chain crosses the membrane as a helical span at residues 17-35 (WVLALVFGLSLVYFLTSTF). The Lumenal portion of the chain corresponds to 36–205 (KQEERAVRDR…GESPPELFPA (170 aa)). Asn-67 is a glycosylation site (N-linked (GlcNAc...) asparagine).

This sequence belongs to the SPRING family. As to quaternary structure, interacts with SCAP.

The protein resides in the golgi apparatus membrane. In terms of biological role, positively regulates hepatic SREBP signaling pathway by modulating the proper localization of SCAP (SREBP cleavage-activating protein) to the endoplasmic reticulum, thereby controlling the level of functional SCAP. The protein is SREBP regulating gene protein of Bos taurus (Bovine).